The chain runs to 87 residues: Small ribosomal subunit protein uS15 (87 aa).

Belongs to the universal ribosomal protein uS15 family. Part of the 30S ribosomal subunit. Forms a bridge to the 50S subunit in the 70S ribosome, contacting the 23S rRNA.

Functionally, one of the primary rRNA binding proteins, it binds directly to 16S rRNA where it helps nucleate assembly of the platform of the 30S subunit by binding and bridging several RNA helices of the 16S rRNA. In terms of biological role, forms an intersubunit bridge (bridge B4) with the 23S rRNA of the 50S subunit in the ribosome. The polypeptide is Small ribosomal subunit protein uS15 (Clostridium acetobutylicum (strain ATCC 824 / DSM 792 / JCM 1419 / IAM 19013 / LMG 5710 / NBRC 13948 / NRRL B-527 / VKM B-1787 / 2291 / W)).